Reading from the N-terminus, the 82-residue chain is Large ribosomal subunit protein bL31B (82 aa).

It belongs to the bacterial ribosomal protein bL31 family. Type B subfamily. Part of the 50S ribosomal subunit.

The polypeptide is Large ribosomal subunit protein bL31B (Bacillus velezensis (strain DSM 23117 / BGSC 10A6 / LMG 26770 / FZB42) (Bacillus amyloliquefaciens subsp. plantarum)).